The primary structure comprises 259 residues: Flap endonuclease Xni (259 aa).

A Mg(2+)-binding site is contributed by Asp-109. The 5'-3' exonuclease domain occupies 165-255 (VTPAQLTDYW…FNLQDIRFNS (91 aa)). K(+)-binding residues include Leu-176, Pro-185, Val-187, and Ile-190. The tract at residues 189 to 194 (GIGPKA) is interaction with DNA.

The protein belongs to the Xni family. Mg(2+) serves as cofactor. It depends on K(+) as a cofactor.

In terms of biological role, has flap endonuclease activity. During DNA replication, flap endonucleases cleave the 5'-overhanging flap structure that is generated by displacement synthesis when DNA polymerase encounters the 5'-end of a downstream Okazaki fragment. This is Flap endonuclease Xni from Vibrio cholerae serotype O1 (strain ATCC 39315 / El Tor Inaba N16961).